We begin with the raw amino-acid sequence, 321 residues long: MSKPIVMERGVKYRDADKMALIPVKNVATEREALLRKPEWMKIKLPADSSRIQGIKAAMRKNGLHSVCEEASCPNLAECFNHGTATFMILGAICTRRCPFCDVAHGRPVAPDANEPQKLAQTIADMGLRYVVVTSVDRDDLRDGGAQHFADCISAIREKNPSIKIETLVPDFRGRMDRALDILTVTPPDVFNHNLENVPRLYRQVRPGADYNWSLKLLERFKEAHPEIPTKSGLMVGLGETNDEIIEVMRDLRRHGVTMLTLGQYLQPSRHHLPVQRYVSPEEFEEMKAEAMAMGFTHAACGPFVRSSYHADLQAKGMEVK.

7 residues coordinate [4Fe-4S] cluster: cysteine 68, cysteine 73, cysteine 79, cysteine 94, cysteine 98, cysteine 101, and serine 308. A Radical SAM core domain is found at 80-297 (FNHGTATFMI…KAEAMAMGFT (218 aa)).

This sequence belongs to the radical SAM superfamily. Lipoyl synthase family. [4Fe-4S] cluster serves as cofactor.

It localises to the cytoplasm. The catalysed reaction is [[Fe-S] cluster scaffold protein carrying a second [4Fe-4S](2+) cluster] + N(6)-octanoyl-L-lysyl-[protein] + 2 oxidized [2Fe-2S]-[ferredoxin] + 2 S-adenosyl-L-methionine + 4 H(+) = [[Fe-S] cluster scaffold protein] + N(6)-[(R)-dihydrolipoyl]-L-lysyl-[protein] + 4 Fe(3+) + 2 hydrogen sulfide + 2 5'-deoxyadenosine + 2 L-methionine + 2 reduced [2Fe-2S]-[ferredoxin]. It functions in the pathway protein modification; protein lipoylation via endogenous pathway; protein N(6)-(lipoyl)lysine from octanoyl-[acyl-carrier-protein]: step 2/2. Its function is as follows. Catalyzes the radical-mediated insertion of two sulfur atoms into the C-6 and C-8 positions of the octanoyl moiety bound to the lipoyl domains of lipoate-dependent enzymes, thereby converting the octanoylated domains into lipoylated derivatives. This Klebsiella pneumoniae (strain 342) protein is Lipoyl synthase.